Here is a 473-residue protein sequence, read N- to C-terminus: GTPase Der (473 aa).

EngA-type G domains follow at residues 5–170 (PVVA…PEDV) and 178–351 (LKLA…ASSM). Residues 11 to 18 (GRPNVGKS), 58 to 62 (DTGGI), 123 to 126 (NKID), 184 to 191 (GRPNVGKS), 231 to 235 (DTAGV), and 296 to 299 (NKWD) contribute to the GTP site. In terms of domain architecture, KH-like spans 352–436 (FKVSTNRLTQ…PLKVEFKLNT (85 aa)). Positions 438–473 (PYAGKKTTSSKKLRPGVSEARQKRRNMKYKKGSHKK) are disordered. Residues 459–473 (QKRRNMKYKKGSHKK) are compositionally biased toward basic residues.

It belongs to the TRAFAC class TrmE-Era-EngA-EngB-Septin-like GTPase superfamily. EngA (Der) GTPase family. As to quaternary structure, associates with the 50S ribosomal subunit.

Its function is as follows. GTPase that plays an essential role in the late steps of ribosome biogenesis. The protein is GTPase Der of Psychrobacter sp. (strain PRwf-1).